Consider the following 338-residue polypeptide: Nicotinate-nucleotide--dimethylbenzimidazole phosphoribosyltransferase (338 aa).

Glutamate 305 acts as the Proton acceptor in catalysis.

It belongs to the CobT family.

It catalyses the reaction 5,6-dimethylbenzimidazole + nicotinate beta-D-ribonucleotide = alpha-ribazole 5'-phosphate + nicotinate + H(+). Its pathway is nucleoside biosynthesis; alpha-ribazole biosynthesis; alpha-ribazole from 5,6-dimethylbenzimidazole: step 1/2. In terms of biological role, catalyzes the synthesis of alpha-ribazole-5'-phosphate from nicotinate mononucleotide (NAMN) and 5,6-dimethylbenzimidazole (DMB). The protein is Nicotinate-nucleotide--dimethylbenzimidazole phosphoribosyltransferase of Rhizobium meliloti (strain 1021) (Ensifer meliloti).